A 452-amino-acid polypeptide reads, in one-letter code: Sesamin methylene transferase (452 aa).

It belongs to the GcvT family. As to quaternary structure, homotrimer.

The catalysed reaction is (+)-sesamin + (6S)-5,6,7,8-tetrahydrofolyl-(gamma-L-Glu)(n) = (+)-sesamin monocatechol + (6R)-5,10-methylenetetrahydrofolyl-(gamma-L-Glu)(n). It catalyses the reaction (+)-sesamin monocatechol + (6S)-5,6,7,8-tetrahydrofolyl-(gamma-L-Glu)(n) = (+)-sesamin dicatechol + (6R)-5,10-methylenetetrahydrofolyl-(gamma-L-Glu)(n). Converts sesamin into sesamin mono- and di-catechol. Catalyzes a ring cleavage to transfer the methylene group to tetrahydrofolate (THF). Also active with (+)-episesamin, (-)-asarinin, sesaminol, (+)-sesamolin and piperine. This chain is Sesamin methylene transferase, found in Sinomonas sp. (strain No.22).